The chain runs to 548 residues: Chaperonin GroEL (548 aa).

ATP is bound by residues 30-33 (TLGP), Lys51, 87-91 (DGTTT), Gly415, 479-481 (NAA), and Asp495.

Belongs to the chaperonin (HSP60) family. As to quaternary structure, forms a cylinder of 14 subunits composed of two heptameric rings stacked back-to-back. Interacts with the co-chaperonin GroES.

The protein localises to the cytoplasm. It carries out the reaction ATP + H2O + a folded polypeptide = ADP + phosphate + an unfolded polypeptide.. Its function is as follows. Together with its co-chaperonin GroES, plays an essential role in assisting protein folding. The GroEL-GroES system forms a nano-cage that allows encapsulation of the non-native substrate proteins and provides a physical environment optimized to promote and accelerate protein folding. In Nitratidesulfovibrio vulgaris (strain DSM 19637 / Miyazaki F) (Desulfovibrio vulgaris), this protein is Chaperonin GroEL.